Here is a 252-residue protein sequence, read N- to C-terminus: GPI alpha-1,4-mannosyltransferase I, stabilizing subunit (252 aa).

Residues 1–22 (MAASALAWLLLWAAGLVGRLAA) form the signal peptide. N-linked (GlcNAc...) asparagine glycosylation is found at N97 and N209. The helical transmembrane segment at 225–245 (VCSVTLLITVLCSTLILLAVF) threads the bilayer.

This sequence belongs to the PIGX family. In terms of assembly, part of the glycosylphosphatidylinositol-mannosyltransferase I complex that is composed of PIGM and PIGX. Interacts with PIGM; PIGX stabilizes PIGM.

It is found in the endoplasmic reticulum membrane. Its pathway is glycolipid biosynthesis; glycosylphosphatidylinositol-anchor biosynthesis. Stabilizing subunit of the glycosylphosphatidylinositol-mannosyltransferase I complex which catalyzes the transfer of the first mannose, via an alpha-1,4 bond from a dolichol-phosphate-mannose (Dol-P-Man) to the glucosaminyl acyl phosphatidylinositol (GlcN-(acyl)PI) intermediate to generate alpha-D-Man-(1-&gt;4)-alpha-D-GlcN-(1-&gt;6)-(1-radyl,2-acyl-sn-glycero-3-phospho)-2-acyl-inositol and participates in the sixth step of the glycosylphosphatidylinositol-anchor biosynthesis. Probably acts by stabilizing the mannosyltransferase PIGM. The sequence is that of GPI alpha-1,4-mannosyltransferase I, stabilizing subunit from Rattus norvegicus (Rat).